Consider the following 553-residue polypeptide: Cytochrome P450 monooxygenase alnD (553 aa).

The chain crosses the membrane as a helical span at residues 351 to 371 (LVGAGFVTSSAFLSWLIYSLV). A heme-binding site is contributed by cysteine 493. Asparagine 518 carries N-linked (GlcNAc...) asparagine glycosylation.

Belongs to the cytochrome P450 family. Heme serves as cofactor.

Its subcellular location is the membrane. Its pathway is polyketide biosynthesis. Its function is as follows. Cytochrome P450 monooxygenase; part of the gene cluster that mediates the biosynthesis of asperlin, a polyketide showing anti-inflammatory, antitumor and antibiotic activities. The first step of the asperlin biosynthesis is the production of the intermediate 2,4,6-octatrienoic acid by the highly redusing polyketide synthase alnA with cleavage of the PKS product by the esterase alnB. 2,4,6-octatrienoic acid is further converted to asperlin via several steps involving the remaining enzymes from the cluster. This chain is Cytochrome P450 monooxygenase alnD, found in Emericella nidulans (strain FGSC A4 / ATCC 38163 / CBS 112.46 / NRRL 194 / M139) (Aspergillus nidulans).